Here is a 149-residue protein sequence, read N- to C-terminus: Putative pre-16S rRNA nuclease (149 aa).

The protein belongs to the YqgF nuclease family.

The protein resides in the cytoplasm. Its function is as follows. Could be a nuclease involved in processing of the 5'-end of pre-16S rRNA. The sequence is that of Putative pre-16S rRNA nuclease from Heliobacterium modesticaldum (strain ATCC 51547 / Ice1).